The primary structure comprises 156 residues: Putative pre-16S rRNA nuclease (156 aa).

The protein belongs to the YqgF nuclease family.

Its subcellular location is the cytoplasm. Could be a nuclease involved in processing of the 5'-end of pre-16S rRNA. The chain is Putative pre-16S rRNA nuclease from Ehrlichia ruminantium (strain Welgevonden).